A 959-amino-acid chain; its full sequence is MMS19 nucleotide excision repair protein (959 aa).

HEAT repeat units follow at residues 794–828 (QKLFHTIMGKMGSKLANYCVHHLKAFVYVLKATPQ), 832–871 (KLNIEQLGPLLFKSLEEHNEAQSLCIALGICEKFVAQQDT), 874–915 (QGHL…YPTF), and 918–956 (LPHKVDVTLALAAALDDPKRLVRNTAVKARNAWYLVGAP).

This sequence belongs to the MET18/MMS19 family. In terms of assembly, component of the CIA complex. Interacts with Xpd and galla-2. Binds to microtubules. Expressed in embryos (at protein level).

The protein localises to the cytoplasm. The protein resides in the cytoskeleton. It localises to the spindle. It is found in the nucleus. Its subcellular location is the midbody. Key component of the cytosolic iron-sulfur protein assembly (CIA) complex, a multiprotein complex that mediates the incorporation of iron-sulfur cluster into apoproteins specifically involved in DNA metabolism and genomic integrity. In the CIA complex, MMS19 acts as an adapter between early-acting CIA components and a subset of cellular target iron-sulfur proteins. Essential for diploid cell cycles, organ growth and development. Regulates mitosis by binding to Xpd and thereby competing with the Xpd-mediated repression on the Cdk-activating kinase (CAK) complex. Regulates the centrosomal localization of the MT regulator tacc, a downstream target of aurA kinase. Binds to microtubules (MT). Regulates spindle and astral MT growth, MT stability and bundling. In neuroblasts, necessary for timely and coordinated spindle assembly and orientation which is necessary for mitotic progression. In young embryos, the maternal protein is important for progression through mitosis. The polypeptide is MMS19 nucleotide excision repair protein (Drosophila melanogaster (Fruit fly)).